Consider the following 568-residue polypeptide: 2-succinyl-5-enolpyruvyl-6-hydroxy-3-cyclohexene-1-carboxylate synthase (568 aa).

This sequence belongs to the TPP enzyme family. MenD subfamily. As to quaternary structure, homodimer. Requires Mg(2+) as cofactor. The cofactor is Mn(2+). Thiamine diphosphate serves as cofactor.

It catalyses the reaction isochorismate + 2-oxoglutarate + H(+) = 5-enolpyruvoyl-6-hydroxy-2-succinyl-cyclohex-3-ene-1-carboxylate + CO2. The protein operates within quinol/quinone metabolism; 1,4-dihydroxy-2-naphthoate biosynthesis; 1,4-dihydroxy-2-naphthoate from chorismate: step 2/7. It participates in quinol/quinone metabolism; menaquinone biosynthesis. Catalyzes the thiamine diphosphate-dependent decarboxylation of 2-oxoglutarate and the subsequent addition of the resulting succinic semialdehyde-thiamine pyrophosphate anion to isochorismate to yield 2-succinyl-5-enolpyruvyl-6-hydroxy-3-cyclohexene-1-carboxylate (SEPHCHC). The polypeptide is 2-succinyl-5-enolpyruvyl-6-hydroxy-3-cyclohexene-1-carboxylate synthase (Pasteurella multocida (strain Pm70)).